A 274-amino-acid polypeptide reads, in one-letter code: Orotidine 5'-phosphate decarboxylase (274 aa).

Lysine 96 acts as the Proton donor in catalysis.

The protein belongs to the OMP decarboxylase family. Type 2 subfamily.

It carries out the reaction orotidine 5'-phosphate + H(+) = UMP + CO2. It functions in the pathway pyrimidine metabolism; UMP biosynthesis via de novo pathway; UMP from orotate: step 2/2. In Bacteroides fragilis (strain ATCC 25285 / DSM 2151 / CCUG 4856 / JCM 11019 / LMG 10263 / NCTC 9343 / Onslow / VPI 2553 / EN-2), this protein is Orotidine 5'-phosphate decarboxylase.